The sequence spans 197 residues: Na(+)-translocating NADH-quinone reductase subunit E (197 aa).

Transmembrane regions (helical) follow at residues 11–31 (SVFIENMALSFFLGMCTFLAV), 35–55 (VSTAFGLGVAVIFVLGLSVPA), 76–96 (FLKFITFIGVIAALVQILEMF), 108–128 (LGIYLPLITVNCAIFGAVSFM), 139–159 (VVYGFGAGLGWMLAIVALAGI), and 175–195 (LGITFIAAGLMAMAFMSFSGI).

This sequence belongs to the NqrDE/RnfAE family. Composed of six subunits; NqrA, NqrB, NqrC, NqrD, NqrE and NqrF.

The protein resides in the cell inner membrane. It catalyses the reaction a ubiquinone + n Na(+)(in) + NADH + H(+) = a ubiquinol + n Na(+)(out) + NAD(+). In terms of biological role, NQR complex catalyzes the reduction of ubiquinone-1 to ubiquinol by two successive reactions, coupled with the transport of Na(+) ions from the cytoplasm to the periplasm. NqrA to NqrE are probably involved in the second step, the conversion of ubisemiquinone to ubiquinol. This Neisseria meningitidis serogroup A / serotype 4A (strain DSM 15465 / Z2491) protein is Na(+)-translocating NADH-quinone reductase subunit E.